The chain runs to 20 residues: Toxin TpF21-Cocle (20 aa).

The LCN-type CS-alpha/beta domain occupies 1–20 (KDGYLVGNDGCKYSCNTYPK).

It belongs to the long (4 C-C) scorpion toxin superfamily. Sodium channel inhibitor family. Beta subfamily. Expressed by the venom gland.

Its subcellular location is the secreted. Beta toxins bind voltage-independently at site-4 of sodium channels (Nav) and shift the voltage of activation toward more negative potentials thereby affecting sodium channel activation and promoting spontaneous and repetitive firing. This Tityus pachyurus (Colombian scorpion) protein is Toxin TpF21-Cocle.